Consider the following 1666-residue polypeptide: Atrochrysone carboxylic acid synthase PKS4 (1666 aa).

One can recognise a Ketosynthase family 3 (KS3) domain in the interval 15 to 452 (FEPIAIVGIG…GNAGFMVIEE (438 aa)). Catalysis depends on for beta-ketoacyl synthase activity residues cysteine 194, histidine 332, and histidine 372. Residues 555–863 (AFCFSGQGGE…WMTALDALMR (309 aa)) are malonyl-CoA:ACP transacylase (MAT) domain. Serine 632 serves as the catalytic For acyl/malonyl transferase activity. Residues 905–1034 (REVKASSTML…EQDLLESLSL (130 aa)) form an N-terminal hotdog fold region. The PKS/mFAS DH domain maps to 905–1206 (REVKASSTML…MAKMKIYVLK (302 aa)). A product template (PT) domain region spans residues 935 to 1203 (LLNHVMAGYT…DVRMAKMKIY (269 aa)). The tract at residues 1050 to 1206 (STDVLRKELA…MAKMKIYVLK (157 aa)) is C-terminal hotdog fold. An O-(pantetheine 4'-phosphoryl)serine modification is found at serine 1269. Residues 1331–1395 (ATSPSLPIMP…TSTEPSQTLV (65 aa)) form the Carrier domain. The proline-rich linker region stretch occupies residues 1334 to 1397 (PSLPIMPNGV…TEPSQTLVAN (64 aa)). An alpha/beta hydrolase superfamily-type thioesterase (TE) domain region spans residues 1444-1529 (TVIGIHCPGL…PPGVVGLTAQ (86 aa)).

It catalyses the reaction holo-[ACP] + 8 malonyl-CoA + 8 H(+) = atrochrysone carboxyl-[ACP] + 8 CO2 + 8 CoA + 2 H2O. It participates in secondary metabolite biosynthesis. Functionally, non-reducing polyketide synthase that synthesizes the universal anthraquinone precursor atrochrysone carboxylic acid from malonyl-CoA. Produces a mixture of both 3R and 3S enantiomers with an excess of the 3S form. PKS4 catalyzes both hepta- and octaketide synthesis and also yields 6-hydroxymusizin, probably via carboxylating activity inherent to the KS domain. The sequence is that of Atrochrysone carboxylic acid synthase PKS4 from Calonarius odorifer (Mushroom).